The sequence spans 520 residues: MEELQGYLEKDRSRQQHFLYPLLFQEYIYALAHDYGLNGSIFYESAEVFGYDNKSSLALVKRLITRIYQQKSLIYLVNDSKQNRFVGHTHNNFFYSRFYSQMISESFSIIVEIPFSLRLVSYLKEKEIPKYHNLRSIHSIFPFLEDKLSHLNYVSAILIPHPIHMEILVQILQCWIQDVPFLHLLRFFLHEYHNWNSFLITQKKSIFVFSKEKKRLFRFIYNFYVFECEFLFVFIRKQSSYLRLTFFGTFFERTHFYGKIEHLQIEKLIVICRNDFHRTFWFFKDPFMHYVRYQGKAILASKGTHLLMTKWKYHFVNFWQYYFNFWSQPYRIQINQLSNYSFYFLGYLSSLLINSSAVRNQMLENSFIIDTLTKKFDTIVPVILLIGSLSKAKFCTISGHPISKPIWANLSDSDILDRFGRICRNLFHYHSGSSKKQGLYRIKYILRLSCARTLARKHKSTVRTFLRRLGSGLLEEFFTEEEEVLSLMFPKTTSFTLHGSHRERIWFLDIIRINELVNRS.

Belongs to the intron maturase 2 family. MatK subfamily.

Its subcellular location is the plastid. It localises to the chloroplast. Functionally, usually encoded in the trnK tRNA gene intron. Probably assists in splicing its own and other chloroplast group II introns. The sequence is that of Maturase K from Galanthus elwesii (Giant snowdrop).